A 350-amino-acid chain; its full sequence is Small ribosomal subunit biogenesis GTPase RsgA (350 aa).

Positions 1-17 (MSKNKLSKGQQRRVNAN) are enriched in polar residues. Residues 1–24 (MSKNKLSKGQQRRVNANHQRRLKT) form a disordered region. The region spanning 104–273 (TSVLTRPDFY…VIDSPGVREF (170 aa)) is the CP-type G domain. GTP is bound by residues 160 to 163 (NKID) and 214 to 222 (GQSGVGKSS). Cysteine 297, cysteine 302, histidine 304, and cysteine 310 together coordinate Zn(2+).

It belongs to the TRAFAC class YlqF/YawG GTPase family. RsgA subfamily. As to quaternary structure, monomer. Associates with 30S ribosomal subunit, binds 16S rRNA. The cofactor is Zn(2+).

Its subcellular location is the cytoplasm. Functionally, one of several proteins that assist in the late maturation steps of the functional core of the 30S ribosomal subunit. Helps release RbfA from mature subunits. May play a role in the assembly of ribosomal proteins into the subunit. Circularly permuted GTPase that catalyzes slow GTP hydrolysis, GTPase activity is stimulated by the 30S ribosomal subunit. The chain is Small ribosomal subunit biogenesis GTPase RsgA from Salmonella schwarzengrund (strain CVM19633).